An 80-amino-acid chain; its full sequence is MARVCQITGKKTRTGNNVSHANNKTKRTFAPNIQKKRFFLSEENRWVTLKLSTKAIKTISSKGLSAVLEKATAAGYLKKY.

A disordered region spans residues 1-23 (MARVCQITGKKTRTGNNVSHANN).

The protein belongs to the bacterial ribosomal protein bL28 family.

The sequence is that of Large ribosomal subunit protein bL28 from Cytophaga hutchinsonii (strain ATCC 33406 / DSM 1761 / CIP 103989 / NBRC 15051 / NCIMB 9469 / D465).